Here is a 70-residue protein sequence, read N- to C-terminus: MNLIAAAIAIGLSALGAGIGNGLIVSRTVEGVARQPEARGQLMSIMFIGIGLVEALPILGLVISFIVLFQ.

2 helical membrane passes run 4-24 (IAAA…NGLI) and 47-67 (FIGI…SFIV).

The protein belongs to the ATPase C chain family. In terms of assembly, F-type ATPases have 2 components, F(1) - the catalytic core - and F(0) - the membrane proton channel. F(1) has five subunits: alpha(3), beta(3), gamma(1), delta(1), epsilon(1). F(0) has three main subunits: a(1), b(2) and c(10-14). The alpha and beta chains form an alternating ring which encloses part of the gamma chain. F(1) is attached to F(0) by a central stalk formed by the gamma and epsilon chains, while a peripheral stalk is formed by the delta and b chains.

The protein localises to the cell membrane. F(1)F(0) ATP synthase produces ATP from ADP in the presence of a proton or sodium gradient. F-type ATPases consist of two structural domains, F(1) containing the extramembraneous catalytic core and F(0) containing the membrane proton channel, linked together by a central stalk and a peripheral stalk. During catalysis, ATP synthesis in the catalytic domain of F(1) is coupled via a rotary mechanism of the central stalk subunits to proton translocation. Functionally, key component of the F(0) channel; it plays a direct role in translocation across the membrane. A homomeric c-ring of between 10-14 subunits forms the central stalk rotor element with the F(1) delta and epsilon subunits. The chain is ATP synthase subunit c from Staphylococcus carnosus (strain TM300).